The sequence spans 121 residues: Small ribosomal subunit protein uS13 (121 aa).

Residues 97-121 (VRGQRTRTNARTRRGARKTVAGKKK) are disordered. Residues 100–121 (QRTRTNARTRRGARKTVAGKKK) show a composition bias toward basic residues.

This sequence belongs to the universal ribosomal protein uS13 family. In terms of assembly, part of the 30S ribosomal subunit. Forms a loose heterodimer with protein S19. Forms two bridges to the 50S subunit in the 70S ribosome.

Located at the top of the head of the 30S subunit, it contacts several helices of the 16S rRNA. In the 70S ribosome it contacts the 23S rRNA (bridge B1a) and protein L5 of the 50S subunit (bridge B1b), connecting the 2 subunits; these bridges are implicated in subunit movement. Contacts the tRNAs in the A and P-sites. This Synechococcus sp. (strain WH7803) protein is Small ribosomal subunit protein uS13.